The sequence spans 745 residues: Ribosomal protein S6 kinase alpha-6 (745 aa).

A disordered region spans residues 1-28 (MLPFAPQDEPWDREMEVFSGGGASSGEV). A Protein kinase 1 domain is found at 73 to 330 (FELLKVLGQG…VEEIKRHLFF (258 aa)). Residues 79–87 (LGQGSFGKV) and Lys105 contribute to the ATP site. The active-site Proton acceptor is the Asp198. Phosphoserine is present on residues Ser232, Ser372, and Ser389. Residues 331–400 (ANIDWDKLYK…VATSIAEEYK (70 aa)) enclose the AGC-kinase C-terminal domain. The 258-residue stretch at 426–683 (YELKEDIGVG…AEQILKHSWI (258 aa)) folds into the Protein kinase 2 domain. Residues 432–440 (IGVGSYSVC) and Lys455 contribute to the ATP site. Asp543 acts as the Proton acceptor in catalysis. Thr581 bears the Phosphothreonine mark.

Belongs to the protein kinase superfamily. AGC Ser/Thr protein kinase family. S6 kinase subfamily. Forms a complex with MAPK3/ERK1 but not with MAPK9 or MAPK14 in serum-starved cells. It depends on Mg(2+) as a cofactor. Phosphorylated at Ser-232, Ser-372, and Ser-389 in serum-starved cells.

It localises to the cytoplasm. It is found in the cytosol. The protein localises to the nucleus. The enzyme catalyses L-seryl-[protein] + ATP = O-phospho-L-seryl-[protein] + ADP + H(+). The catalysed reaction is L-threonyl-[protein] + ATP = O-phospho-L-threonyl-[protein] + ADP + H(+). Its activity is regulated as follows. Constitutively activated by phosphorylation at Ser-232, Ser-372, and Ser-389 in serum-starved cells. Does not require growth factor stimulation for significant kinase activity. Functionally, constitutively active serine/threonine-protein kinase that exhibits growth-factor-independent kinase activity and that may participate in p53/TP53-dependent cell growth arrest signaling and play an inhibitory role during embryogenesis. This is Ribosomal protein S6 kinase alpha-6 (RPS6KA6) from Homo sapiens (Human).